Reading from the N-terminus, the 448-residue chain is C4-dicarboxylate transport protein (448 aa).

The next 7 membrane-spanning stretches (helical) occupy residues 22–42, 55–75, 90–110, 137–157, 159–179, 199–219, and 232–252; these read FQVV…PAFA, LVKM…IAGM, TYFL…AHVV, ELSL…SAFV, GNIL…ALVG, LVHM…AFTI, and WLVG…LGIV. Positions 428-448 are disordered; sequence RAPPLQAPVPPPDAVAPVSAR. Pro residues predominate over residues 432–441; the sequence is LQAPVPPPDA.

It belongs to the dicarboxylate/amino acid:cation symporter (DAACS) (TC 2.A.23) family.

Its subcellular location is the cell inner membrane. Functionally, responsible for the transport of dicarboxylates such as succinate, fumarate, and malate from the periplasm across the membrane. The sequence is that of C4-dicarboxylate transport protein from Xanthomonas campestris pv. campestris (strain 8004).